The following is a 148-amino-acid chain: Aspartate carbamoyltransferase regulatory chain (148 aa).

Positions 106, 111, 134, and 137 each coordinate Zn(2+).

Belongs to the PyrI family. As to quaternary structure, contains catalytic and regulatory chains. The cofactor is Zn(2+).

Involved in allosteric regulation of aspartate carbamoyltransferase. This Methanococcus maripaludis (strain C7 / ATCC BAA-1331) protein is Aspartate carbamoyltransferase regulatory chain.